A 195-amino-acid chain; its full sequence is Nascent polypeptide-associated complex subunit alpha (195 aa).

Disordered stretches follow at residues 1–59 (MTGS…SRSE) and 132–153 (TREA…EEDS). The segment covering 7-16 (TRQKEVKEPQ) has biased composition (basic and acidic residues). Residues 19–33 (VSDDSDNEAVEQELT) are compositionally biased toward acidic residues. Residues 47 to 59 (DHIDKQAKQSRSE) are compositionally biased toward basic and acidic residues. The 66-residue stretch at 56 to 121 (SRSEKKARKL…AKIEDLTQHA (66 aa)) folds into the NAC-A/B domain. The span at 142–153 (EEDENEDVEEDS) shows a compositional bias: acidic residues.

It belongs to the NAC-alpha family. In terms of assembly, may be part of the nascent polypeptide-associated complex (NAC), which is a heterodimer of icd-2 and icd-1 (via NAC-A/B domains).

It is found in the cytoplasm. Its function is as follows. May prevent inappropriate targeting of non-secretory polypeptides to the endoplasmic reticulum (ER). Plays a role in the response to heat stress. This chain is Nascent polypeptide-associated complex subunit alpha, found in Caenorhabditis elegans.